The sequence spans 97 residues: Mapk-regulated corepressor-interacting protein 1 (97 aa).

Disordered stretches follow at residues 1–29 (MTSSPVSRVVYNGKRPASNTRSPSSNEIF) and 72–97 (SNSLKSFKPIDLNDLKRRTVQDPKKS). The span at 17 to 28 (ASNTRSPSSNEI) shows a compositional bias: polar residues. A compositionally biased stretch (basic and acidic residues) spans 82–97 (DLNDLKRRTVQDPKKS).

This sequence belongs to the MCRIP family.

The protein resides in the nucleus. It localises to the cytoplasm. The protein localises to the stress granule. In terms of biological role, may play a role in the regulation of the epithelial-mesenchymal transition. This chain is Mapk-regulated corepressor-interacting protein 1 (Mcrip1), found in Xenopus tropicalis (Western clawed frog).